Reading from the N-terminus, the 587-residue chain is Complement component C8 beta chain (587 aa).

The signal sequence occupies residues 1 to 31; that stretch reads MNHKLKPTVGLGYCLLCAALCLLLLRDVAIA. The propeptide occupies 32-44; the sequence is GSGEEPSGVREAR. Residues 56–111 enclose the TSP type-1 1 domain; that stretch reads DCVQSEWSSWTRCDVCRKKRYRYAKLVQPSQFGGEPCHVQGKEVEPCSPPSRYDCT. Disulfide bonds link Cys57-Cys92, Cys68-Cys102, Cys71-Cys110, Cys118-Cys129, and Cys123-Cys142. Trp62 and Trp65 each carry a C-linked (Man) tryptophan glycan. The 43-residue stretch at 117–159 folds into the LDL-receptor class A domain; the sequence is LCEGFLCTYTGRCVPIDLRCNGDDDCGDWSAEKGSPKVPKACK. Positions 134, 137, 139, 141, and 148 each coordinate Ca(2+). The region spanning 154–500 is the MACPF domain; that stretch reads VPKACKQEAQ…EYLEESSSCR (347 aa). Cys158 and Cys196 are oxidised to a cystine. Transmembrane regions (beta stranded) follow at residues 248–255, 258–265, 375–382, and 388–395; these read TTVSIGFA, GVAEFGFN, EQIVLKVG, and VYVTVGLE. 5 disulfide bridges follow: Cys374–Cys399, Cys499–Cys546, Cys501–Cys517, Cys504–Cys519, and Cys521–Cys530. The region spanning 501 to 531 is the EGF-like domain; that stretch reads CAPCRNNGLAVLKGTRCECVCPSGYSGLGCE. The region spanning 541–587 is the TSP type-1 2 domain; it reads DGSWSCWGSWSPCRGRSKTRSRQCNNPAPSSGGIACRGLQMETTDCF. 2 C-linked (Man) tryptophan glycosylation sites follow: Trp547 and Trp550. A disulfide bridge links Cys553 with Cys586.

This sequence belongs to the complement C6/C7/C8/C9 family. As to quaternary structure, heterotrimer of 3 chains: alpha (C8A), beta (C8B) and gamma (C8G); the alpha and gamma chains are disulfide bonded. Component of the membrane attack complex (MAC), composed of complement C5b, C6, C7, C8A, C8B, C8G and multiple copies of the pore-forming subunit C9.

Its subcellular location is the secreted. The protein localises to the target cell membrane. Functionally, component of the membrane attack complex (MAC), a multiprotein complex activated by the complement cascade, which inserts into a target cell membrane and forms a pore, leading to target cell membrane rupture and cell lysis. The MAC is initiated by proteolytic cleavage of C5 into complement C5b in response to the classical, alternative, lectin and GZMK complement pathways. The complement pathways consist in a cascade of proteins that leads to phagocytosis and breakdown of pathogens and signaling that strengthens the adaptive immune system. C8B, together with C8A and C8G, inserts into the target membrane, but does not form pores by itself. During MAC assembly, associates with C5b, C6 and C7 to form the C5b8 intermediate complex that inserts into the target membrane and traverses the bilayer increasing membrane rigidity. The polypeptide is Complement component C8 beta chain (c8b) (Oncorhynchus mykiss (Rainbow trout)).